The sequence spans 358 residues: Pyruvate dehydrogenase E1 component subunit alpha (358 aa).

In terms of assembly, heterodimer of an alpha and a beta chain. The cofactor is thiamine diphosphate.

The catalysed reaction is N(6)-[(R)-lipoyl]-L-lysyl-[protein] + pyruvate + H(+) = N(6)-[(R)-S(8)-acetyldihydrolipoyl]-L-lysyl-[protein] + CO2. The pyruvate dehydrogenase complex catalyzes the overall conversion of pyruvate to acetyl-CoA and CO(2). It contains multiple copies of three enzymatic components: pyruvate dehydrogenase (E1), dihydrolipoamide acetyltransferase (E2) and lipoamide dehydrogenase (E3). In Mycoplasma pneumoniae (strain ATCC 29342 / M129 / Subtype 1) (Mycoplasmoides pneumoniae), this protein is Pyruvate dehydrogenase E1 component subunit alpha (pdhA).